A 313-amino-acid polypeptide reads, in one-letter code: MRTIFMGTPDFSVPFIEAIARSTHNLNLVVTQPDRRKGRGKELQPPPAKRKAEELGIDVFQPESIHNNYAYQILSDIEPHLIVTAAYGQILPRKILDLPRIKAINVHASLLPEYRGAAPIHRAVMDGKEQTGVTIMEMCDKMDAGDILNYESVDIGKTDTTGDVYKQIITVGPQLLIETMDLLEKNQVTPLKQDENQVSYAPKLKKEDEYLDFSKYTNTEVFNRVRGLNPWPGAFTKFEGKRLKIWETKVHNSSSFNSNSKPGEIIEINQQGPVVKCCQGSVILTKIQPSGKKAMTGEQFIRGYDIKSGIQLE.

Positions 32-51 (QPDRRKGRGKELQPPPAKRK) are disordered. Residue 109 to 112 (SLLP) participates in (6S)-5,6,7,8-tetrahydrofolate binding.

The protein belongs to the Fmt family.

The enzyme catalyses L-methionyl-tRNA(fMet) + (6R)-10-formyltetrahydrofolate = N-formyl-L-methionyl-tRNA(fMet) + (6S)-5,6,7,8-tetrahydrofolate + H(+). In terms of biological role, attaches a formyl group to the free amino group of methionyl-tRNA(fMet). The formyl group appears to play a dual role in the initiator identity of N-formylmethionyl-tRNA by promoting its recognition by IF2 and preventing the misappropriation of this tRNA by the elongation apparatus. This Natranaerobius thermophilus (strain ATCC BAA-1301 / DSM 18059 / JW/NM-WN-LF) protein is Methionyl-tRNA formyltransferase.